A 338-amino-acid polypeptide reads, in one-letter code: Trans-enoyl reductase fsr4 (338 aa).

65 to 68 (KDWK) serves as a coordination point for NADP(+). 147 to 153 (AAFTAAC) lines the substrate pocket. NADP(+) contacts are provided by residues 182–185 (SSAV), 205–208 (AGRA), tyrosine 227, and 277–278 (II).

Belongs to the zinc-containing alcohol dehydrogenase family.

Trans-enoyl reductase; part of the gene cluster that mediates the biosynthesis of fusarubins, highly pigmented naphthoquinones responsible for the coloration of the fruiting bodies. The non-reducing polyketide synthase FSR1 is responsible for the condensation of seven acetyl-CoA units to yield a haptaketide. After rings A and B are formed by aldol-type cyclization, the PKS-derived product is released as 6-O-demethylfusarubinaldehyde. Then, two hydroxyl groups at C-5 and C-10 are incorporated by FSR3, and simultaneously hydroxyl groups at C-6 and C-8 are methylated by FSR2. The aldehyde is, on the one hand, reduced by FSR3 to 8-O-methylfusarubin alcohol, which equilibrates mainly with 8-O-methylfusarubin and only small amounts of 8-O-methylnectriafurone. On the other hand, the aldehyde can be oxidized to form 8-O-methylfusarubinic acid, a reaction driven by FSR3 equilibrating with 8-O-methylfusarubinlactone, finally resulting in 8-O-methylanhydrofusarubinlactol after a further reduction step and loss of water. 8-O-Methylfusarubinic acid can also undergo decarboxylation, resulting in 8-O-methyl-13-hydroxynorjavanicin after another hydroxylation step at C-13. Both steps are most likely also accomplished by FSR3. No enzymatic function has been determined so far for either FSR4 and FSR5. Their deletion does not alter the product spectrum, but the possibility that they catalyze specific enzymatic steps during perithecium development cannot be ruled out. FSR4 might possess a regulatory function in the biosynthesis of fusarubins. This chain is Trans-enoyl reductase fsr4, found in Gibberella fujikuroi (strain CBS 195.34 / IMI 58289 / NRRL A-6831) (Bakanae and foot rot disease fungus).